The following is a 509-amino-acid chain: Thymus-specific serine protease (509 aa).

The N-terminal stretch at M1 to P22 is a signal peptide. Residues N69 and N171 are each glycosylated (N-linked (GlcNAc...) asparagine). The active-site Charge relay system is the S184. N-linked (GlcNAc...) asparagine glycosylation occurs at N320. Active-site charge relay system residues include D446 and H471.

Belongs to the peptidase S28 family. As to expression, expressed predominantly in cortical thymic epithelial cells, with highest expression around vessels and the thymic capsule.

The protein localises to the cytoplasmic vesicle. In terms of biological role, protease that may play a role in T-cell development. The polypeptide is Thymus-specific serine protease (Prss16) (Mus musculus (Mouse)).